The following is an 83-amino-acid chain: uncharacterized protein (83 aa).

Residues 50–70 (IMVFLGEAWIILIPFAIFCII) traverse the membrane as a helical segment.

It belongs to the plectrovirus ORF7 family.

It is found in the host membrane. This is an uncharacterized protein from Spiroplasma melliferum (SpV1).